Consider the following 504-residue polypeptide: Maturase K (504 aa).

It belongs to the intron maturase 2 family. MatK subfamily.

It is found in the plastid. Its subcellular location is the chloroplast. Functionally, usually encoded in the trnK tRNA gene intron. Probably assists in splicing its own and other chloroplast group II introns. This Cynophalla hastata (Broadleaf caper) protein is Maturase K.